The following is a 183-amino-acid chain: Capsid protein (183 aa).

Residues 136-183 form a disordered region; that stretch reads NAPILSTLPETTVVRRRGRSPRRRTPSPRRRRSQSPRRRRSQSRESQC. Residues 149 to 176 are compositionally biased toward basic residues; that stretch reads VRRRGRSPRRRTPSPRRRRSQSPRRRRS. Residues S155, S162, and S170 each carry the phosphoserine; by host modification. The 1; half-length repeat unit spans residues 155–161; sequence SPRRRTP. The 3 X 8 AA repeats of S-P-R-R-R-[PR]-S-Q stretch occupies residues 155-177; the sequence is SPRRRTPSPRRRRSQSPRRRRSQ. Residues 158–175 carry the Bipartite nuclear localization signal motif; it reads RRTPSPRRRRSQSPRRRR. 2 repeat units span residues 162 to 169 and 170 to 177. Residues 177 to 183 are RNA binding; sequence QSRESQC.

Belongs to the orthohepadnavirus core antigen family. In terms of assembly, homodimerizes, then multimerizes. Interacts with cytosol exposed regions of viral L glycoprotein present in the reticulum-to-Golgi compartment. Interacts with human FLNB. Phosphorylated form interacts with host importin alpha; this interaction depends on the exposure of the NLS, which itself depends upon genome maturation and/or phosphorylation of the capsid protein. Interacts with host NUP153. In terms of processing, phosphorylated by host SRPK1, SRPK2, and maybe protein kinase C or GAPDH. Phosphorylation is critical for pregenomic RNA packaging. Protein kinase C phosphorylation is stimulated by HBx protein and may play a role in transport of the viral genome to the nucleus at the late step during the viral replication cycle.

It localises to the virion. Its subcellular location is the host cytoplasm. Self assembles to form an icosahedral capsid. Most capsids appear to be large particles with an icosahedral symmetry of T=4 and consist of 240 copies of capsid protein, though a fraction forms smaller T=3 particles consisting of 180 capsid proteins. Entering capsids are transported along microtubules to the nucleus. Phosphorylation of the capsid is thought to induce exposure of nuclear localization signal in the C-terminal portion of the capsid protein that allows binding to the nuclear pore complex via the importin (karyopherin-) alpha and beta. Capsids are imported in intact form through the nuclear pore into the nuclear basket, where it probably binds NUP153. Only capsids that contain the mature viral genome can release the viral DNA and capsid protein into the nucleoplasm. Immature capsids get stuck in the basket. Capsids encapsulate the pre-genomic RNA and the P protein. Pre-genomic RNA is reverse-transcribed into DNA while the capsid is still in the cytoplasm. The capsid can then either be directed to the nucleus, providing more genomes for transcription, or bud through the endoplasmic reticulum to provide new virions. The chain is Capsid protein from Homo sapiens (Human).